The primary structure comprises 588 residues: Adenylate kinase 5, chloroplastic (588 aa).

The segment at 1–34 is disordered; sequence MASLSLSSAHFSSTSSSSRSSISTSSLSPSSTSL. The N-terminal 73 residues, 1–73, are a transit peptide targeting the chloroplast; it reads MASLSLSSAH…SFSTSNSQIR (73 aa). 89 to 94 contacts ATP; it reads ASGKGT. The NMP stretch occupies residues 109 to 138; the sequence is STGDLLRAEVSSGTDIGKRAKEFMNSGSLV. AMP is bound by residues R115, 136–138, 165–168, and Q172; these read SLV and GFPR. The tract at residues 202-235 is LID; sequence GRRLDPVTGKIYHIKNYPPESDEIKARLVTRPDD. Residue R203 coordinates ATP. R232 and R243 together coordinate AMP.

The protein belongs to the adenylate kinase family. In terms of assembly, monomer.

Its subcellular location is the plastid. The protein localises to the chloroplast. The catalysed reaction is AMP + ATP = 2 ADP. Functionally, catalyzes the reversible transfer of the terminal phosphate group between ATP and AMP. The chain is Adenylate kinase 5, chloroplastic from Arabidopsis thaliana (Mouse-ear cress).